A 617-amino-acid polypeptide reads, in one-letter code: Protein 4.1 (617 aa).

An FERM domain is found at 1-282; that stretch reads MHCKVSLLDD…EHHTFFRLTS (282 aa). Tyr13 carries the post-translational modification Phosphotyrosine. Residue Thr169 is modified to Phosphothreonine. The disordered stretch occupies residues 308 to 401; sequence TRQASALIDR…AEPEPSEAWK (94 aa). Residues Ser312, Ser331, and Ser333 each carry the phosphoserine modification. The segment covering 348 to 361 has biased composition (low complexity); sequence RPTSAPAIAPSPAA. Residues 387–396 show a composition bias toward acidic residues; sequence APPEDAEPEP. Residues 401–466 are spectrin--actin-binding; that stretch reads KKKRERLDGE…WDKRLSTHSP (66 aa). At Tyr413 the chain carries Phosphotyrosine; by EGFR. A phosphoserine mark is found at Ser417, Ser427, Ser437, and Ser462. Residue Ser465 is modified to Phosphoserine; by CDK1. The interval 467–617 is C-terminal (CTD); that stretch reads FRTLNINGQI…VHQETEISEE (151 aa). Phosphothreonine is present on residues Thr489 and Thr612.

Binds with a high affinity to glycophorin and with lower affinity to band III protein. Associates with the nuclear mitotic apparatus. Binds calmodulin, CPAP and DLG1. Also found to associate with contractile apparatus and tight junctions. Interacts with NUMA1; this interaction is negatively regulated by CDK1 during metaphase and promotes anaphase-specific localization of NUMA1 in symmetrically dividing cells. Interacts with ATP2B1; regulates small intestinal calcium absorption through regulation of membrane expression of ATP2B1. Post-translationally, phosphorylated at multiple sites by different protein kinases and each phosphorylation event selectively modulates the protein's functions. In terms of processing, phosphorylation on Tyr-413 reduces the ability of 4.1 to promote the assembly of the spectrin/actin/4.1 ternary complex.

The protein resides in the nucleus. It localises to the cytoplasm. Its subcellular location is the cytoskeleton. The protein localises to the cell cortex. Its function is as follows. Protein 4.1 is a major structural element of the erythrocyte membrane skeleton. It plays a key role in regulating membrane physical properties of mechanical stability and deformability by stabilizing spectrin-actin interaction. Recruits DLG1 to membranes. Required for dynein-dynactin complex and NUMA1 recruitment at the mitotic cell cortex during anaphase. This Bos taurus (Bovine) protein is Protein 4.1.